A 94-amino-acid polypeptide reads, in one-letter code: Large ribosomal subunit protein uL23 (94 aa).

It belongs to the universal ribosomal protein uL23 family. Part of the 50S ribosomal subunit. Contacts protein L29, and trigger factor when it is bound to the ribosome.

One of the early assembly proteins it binds 23S rRNA. One of the proteins that surrounds the polypeptide exit tunnel on the outside of the ribosome. Forms the main docking site for trigger factor binding to the ribosome. The chain is Large ribosomal subunit protein uL23 from Treponema denticola (strain ATCC 35405 / DSM 14222 / CIP 103919 / JCM 8153 / KCTC 15104).